Reading from the N-terminus, the 82-residue chain is Exodeoxyribonuclease 7 small subunit (82 aa).

It belongs to the XseB family. As to quaternary structure, heterooligomer composed of large and small subunits.

The protein localises to the cytoplasm. It carries out the reaction Exonucleolytic cleavage in either 5'- to 3'- or 3'- to 5'-direction to yield nucleoside 5'-phosphates.. Bidirectionally degrades single-stranded DNA into large acid-insoluble oligonucleotides, which are then degraded further into small acid-soluble oligonucleotides. This Pectobacterium atrosepticum (strain SCRI 1043 / ATCC BAA-672) (Erwinia carotovora subsp. atroseptica) protein is Exodeoxyribonuclease 7 small subunit.